Here is a 333-residue protein sequence, read N- to C-terminus: Methylosome protein WDR77 (333 aa).

7 WD repeats span residues 16–59 (CMEV…GAPN), 68–106 (QTEA…SLLV), 113–152 (EHDD…VLKS), 155–195 (AHSS…PATR), 199–240 (CASD…SAQT), 243–283 (VHSQ…VFRD), and 285–328 (SHRD…NLIA).

In terms of assembly, heterotetramer; dimer of heterodimer with prmt5. Interacts with histone h2a and h4 and with nucleoplasmin. As to expression, detected in egg (at protein level).

It localises to the cytoplasm. It is found in the nucleus. Non-catalytic component of the 20S prmt5-containing methyltransferase complex, which modifies specific arginines to dimethylarginines in several spliceosomal Sm proteins and histones. Required for normal prmt5 methyltransferase activity. In Xenopus laevis (African clawed frog), this protein is Methylosome protein WDR77.